The primary structure comprises 91 residues: Small ribosomal subunit protein uS19 (91 aa).

The protein belongs to the universal ribosomal protein uS19 family.

Protein S19 forms a complex with S13 that binds strongly to the 16S ribosomal RNA. The sequence is that of Small ribosomal subunit protein uS19 from Halorhodospira halophila (strain DSM 244 / SL1) (Ectothiorhodospira halophila (strain DSM 244 / SL1)).